A 337-amino-acid chain; its full sequence is Glyceraldehyde-3-phosphate dehydrogenase 2 (337 aa).

Residues 11–12, D35, R80, and T122 each bind NADP(+); that span reads RI. D-glyceraldehyde 3-phosphate is bound by residues 153–155, T184, R199, 212–213, and R235; these read SCT and TG. C154 acts as the Nucleophile in catalysis. N317 contributes to the NADP(+) binding site.

Homotetramer.

It localises to the cytoplasm. It carries out the reaction D-glyceraldehyde 3-phosphate + phosphate + NADP(+) = (2R)-3-phospho-glyceroyl phosphate + NADPH + H(+). The catalysed reaction is D-glyceraldehyde 3-phosphate + phosphate + NAD(+) = (2R)-3-phospho-glyceroyl phosphate + NADH + H(+). It functions in the pathway carbohydrate biosynthesis; Calvin cycle. Functionally, gap2 has a major role in carbon fixation as a component of the Calvin cycle. Catalyzes the oxidative phosphorylation of glyceraldehyde 3-phosphate (G3P) to 1,3-bisphosphoglycerate (BPG) using the cofactor NADP. The first reaction step involves the formation of a hemiacetal intermediate between G3P and a cysteine residue, and this hemiacetal intermediate is then oxidized to a thioester, with concomitant reduction of NADP to NADPH. The reduced NADPH is then exchanged with the second NAD, and the thioester is attacked by a nucleophilic inorganic phosphate to produce BPG. The protein is Glyceraldehyde-3-phosphate dehydrogenase 2 (gap2) of Nostoc sp. (strain PCC 7120 / SAG 25.82 / UTEX 2576).